The following is a 123-amino-acid chain: UPF0102 protein mma_0204 (123 aa).

It belongs to the UPF0102 family.

This Janthinobacterium sp. (strain Marseille) (Minibacterium massiliensis) protein is UPF0102 protein mma_0204.